Reading from the N-terminus, the 457-residue chain is Chromosomal replication initiator protein DnaA (457 aa).

A domain I, interacts with DnaA modulators region spans residues 1–90 (MAVSLWQQCI…RPSAKPQAPA (90 aa)). Positions 79 to 120 (GSRPSAKPQAPAPAAVKAAAPQPKPGNSFVSQPEPAVSNHRS) are disordered. Residues 84–99 (AKPQAPAPAAVKAAAP) show a composition bias toward low complexity. The tract at residues 91–120 (PAAVKAAAPQPKPGNSFVSQPEPAVSNHRS) is domain II. Residues 121-337 (NINPTYQFDN…GALNRVIANA (217 aa)) form a domain III, AAA+ region region. ATP contacts are provided by glycine 165, glycine 167, lysine 168, and threonine 169. The interval 338–457 (NFTGRPITID…YANLIRTLSS (120 aa)) is domain IV, binds dsDNA.

Belongs to the DnaA family. As to quaternary structure, oligomerizes as a right-handed, spiral filament on DNA at oriC.

The protein resides in the cytoplasm. Functionally, plays an essential role in the initiation and regulation of chromosomal replication. ATP-DnaA binds to the origin of replication (oriC) to initiate formation of the DNA replication initiation complex once per cell cycle. Binds the DnaA box (a 9 base pair repeat at the origin) and separates the double-stranded (ds)DNA. Forms a right-handed helical filament on oriC DNA; dsDNA binds to the exterior of the filament while single-stranded (ss)DNA is stabiized in the filament's interior. The ATP-DnaA-oriC complex binds and stabilizes one strand of the AT-rich DNA unwinding element (DUE), permitting loading of DNA polymerase. After initiation quickly degrades to an ADP-DnaA complex that is not apt for DNA replication. Binds acidic phospholipids. The protein is Chromosomal replication initiator protein DnaA of Shewanella amazonensis (strain ATCC BAA-1098 / SB2B).